The chain runs to 531 residues: Tyrosine 2,3-aminomutase (531 aa).

Catalysis depends on Y51, which acts as the Proton donor/acceptor. H81 is a substrate binding site. The segment at residues 140–142 (ASG) is a cross-link (5-imidazolinone (Ala-Gly)). S141 is modified (2,3-didehydroalanine (Ser)). 2 residues coordinate substrate: N193 and R298.

It belongs to the TAL/TAM family. In terms of assembly, homotetramer; dimer of dimers. In terms of processing, contains an active site 4-methylidene-imidazol-5-one (MIO), which is formed autocatalytically by cyclization and dehydration of residues Ala-Ser-Gly.

The catalysed reaction is L-tyrosine = 3-amino-3-(4-hydroxyphenyl)propanoate. It catalyses the reaction L-tyrosine = (E)-4-coumarate + NH4(+). Has aminomutase and, to a lesser extent, ammonia-lyase activity. Primarily, catalyzes the rearrangement of L-tyrosine to R-beta-tyrosine, which is incorporated into secondary metabolites called chondramides. The aminomutase activity mainly produces R-beta-tyrosine but also S-beta tyrosine in smaller amounts. Does not accept D-tyrosine, L-histidine or L-phenylalanine as substrates. This Chondromyces crocatus protein is Tyrosine 2,3-aminomutase.